A 224-amino-acid polypeptide reads, in one-letter code: Large ribosomal subunit protein uL3 (224 aa).

Q158 carries the post-translational modification N5-methylglutamine.

Belongs to the universal ribosomal protein uL3 family. As to quaternary structure, part of the 50S ribosomal subunit. Forms a cluster with proteins L14 and L19. In terms of processing, methylated by PrmB.

Functionally, one of the primary rRNA binding proteins, it binds directly near the 3'-end of the 23S rRNA, where it nucleates assembly of the 50S subunit. This chain is Large ribosomal subunit protein uL3, found in Paracidovorax citrulli (strain AAC00-1) (Acidovorax citrulli).